A 98-amino-acid chain; its full sequence is Phosphoribosyl-ATP pyrophosphatase (98 aa).

The protein belongs to the PRA-PH family.

It is found in the cytoplasm. It carries out the reaction 1-(5-phospho-beta-D-ribosyl)-ATP + H2O = 1-(5-phospho-beta-D-ribosyl)-5'-AMP + diphosphate + H(+). Its pathway is amino-acid biosynthesis; L-histidine biosynthesis; L-histidine from 5-phospho-alpha-D-ribose 1-diphosphate: step 2/9. The sequence is that of Phosphoribosyl-ATP pyrophosphatase from Pelotomaculum thermopropionicum (strain DSM 13744 / JCM 10971 / SI).